Reading from the N-terminus, the 933-residue chain is uncharacterized protein (933 aa).

Residues 244-255 (KKDIGAKPKPVD) show a composition bias toward basic and acidic residues. 2 disordered regions span residues 244 to 277 (KKDIGAKPKPVDDVSPQPVRARTPPENTVVELPD) and 343 to 364 (SAPHQPSSQHAQMGRHSQEWKG). Residues 343-353 (SAPHQPSSQHA) show a composition bias toward polar residues. The helical transmembrane segment at 771–791 (VIHGMVLMFAGGKLLFGGCVL) threads the bilayer. The span at 890–907 (DKIEKEPPPSPEKVKPPE) shows a compositional bias: basic and acidic residues. Residues 890-933 (DKIEKEPPPSPEKVKPPEIELQPFTKMRRSSKKTAGFKKLNSKK) form a disordered region. Residues 915–933 (KMRRSSKKTAGFKKLNSKK) are compositionally biased toward basic residues.

The protein resides in the membrane. This is an uncharacterized protein from Mus musculus (Mouse).